The primary structure comprises 779 residues: Probable ATP-dependent RNA helicase DHX40 (779 aa).

The disordered stretch occupies residues 1–53 (MSRFPAVAGRAPRRQEEGERSRDLQEERPSAVCIADREEKGCTSQEGGTTPTF). Residues 13–41 (RRQEEGERSRDLQEERPSAVCIADREEKG) are compositionally biased toward basic and acidic residues. Polar residues predominate over residues 42–53 (CTSQEGGTTPTF). Residues 63 to 231 (IQAVRDNSFL…FGNCPIFDIP (169 aa)) form the Helicase ATP-binding domain. Position 76-83 (76-83 (GNTGSGKT)) interacts with ATP. Residues 173 to 176 (DEAH) carry the DEAH box motif. Residues 263–442 (TMDIHLNEMA…SVVLTLKCLA (180 aa)) enclose the Helicase C-terminal domain. A disordered region spans residues 737–779 (SKDVLKKMQRRNDDKSISDARARFLERKQQRTQDHSDTRKETG).

It belongs to the DEAD box helicase family. DEAH subfamily.

It carries out the reaction ATP + H2O = ADP + phosphate + H(+). Its function is as follows. Probable ATP-dependent RNA helicase. The sequence is that of Probable ATP-dependent RNA helicase DHX40 (DHX40) from Pongo abelii (Sumatran orangutan).